The primary structure comprises 174 residues: Pituitary tumor-transforming gene 1 protein-interacting protein (174 aa).

An N-terminal signal peptide occupies residues 1–29; it reads MASAVLGLTLRWVMFLSAVLLLLLPGASA. The Extracellular segment spans residues 30 to 93; sequence QEPPGVGCSE…RWGVCWVNFE (64 aa). The 54-residue stretch at 36-89 folds into the PSI domain; it reads GCSEYTNRSCEECLRNVSCLWCNENKACLDYPVRKILPPASLCKLSSARWGVCW. N42 and N51 each carry an N-linked (GlcNAc...) asparagine glycan. Residues 94–114 traverse the membrane as a helical segment; it reads ALIITMSVLGGSVLLGITVCC. The Cytoplasmic portion of the chain corresponds to 115-174; that stretch reads CCCCRRKRSRKPDKSDERAMREQEERRVRQEERRAEMKSRHDEIRKKYGLFKEQNPYEKF. Residues 126–155 form a disordered region; that stretch reads PDKSDERAMREQEERRVRQEERRAEMKSRH. Residues 127–163 are a coiled coil; sequence DKSDERAMREQEERRVRQEERRAEMKSRHDEIRKKYG. Y171 is modified (phosphotyrosine).

As to quaternary structure, interacts with PTTG1.

Its subcellular location is the cell membrane. The protein localises to the cytoplasm. It localises to the nucleus. In terms of biological role, may facilitate PTTG1 nuclear translocation. The chain is Pituitary tumor-transforming gene 1 protein-interacting protein (Pttg1ip) from Rattus norvegicus (Rat).